A 208-amino-acid chain; its full sequence is Small ribosomal subunit protein eS8 (208 aa).

A disordered region spans residues 1–27 (MGISRDNWHKRRKTGGKRKPYHKKRKY). Glycine 2 carries the N-myristoyl glycine lipid modification. Residues 8–26 (WHKRRKTGGKRKPYHKKRK) are compositionally biased toward basic residues. 2 positions are modified to N6-acetyllysine: lysine 37 and lysine 128. Position 130 is a phosphothreonine (threonine 130). Serine 160 bears the Phosphoserine mark. Residues lysine 170 and lysine 193 each participate in a glycyl lysine isopeptide (Lys-Gly) (interchain with G-Cter in SUMO2) cross-link.

This sequence belongs to the eukaryotic ribosomal protein eS8 family. In terms of assembly, component of the small ribosomal subunit. Identified in a IGF2BP1-dependent mRNP granule complex containing untranslated mRNAs. Part of the small subunit (SSU) processome, composed of more than 70 proteins and the RNA chaperone small nucleolar RNA (snoRNA) U3.

The protein resides in the cytoplasm. The protein localises to the membrane. It localises to the nucleus. It is found in the nucleolus. Functionally, component of the small ribosomal subunit. The ribosome is a large ribonucleoprotein complex responsible for the synthesis of proteins in the cell. Part of the small subunit (SSU) processome, first precursor of the small eukaryotic ribosomal subunit. During the assembly of the SSU processome in the nucleolus, many ribosome biogenesis factors, an RNA chaperone and ribosomal proteins associate with the nascent pre-rRNA and work in concert to generate RNA folding, modifications, rearrangements and cleavage as well as targeted degradation of pre-ribosomal RNA by the RNA exosome. This Mus musculus (Mouse) protein is Small ribosomal subunit protein eS8 (Rps8).